The chain runs to 173 residues: Peptide deformylase (173 aa).

2 residues coordinate Fe cation: Cys-98 and His-140. Residue Glu-141 is part of the active site. A Fe cation-binding site is contributed by His-144.

This sequence belongs to the polypeptide deformylase family. Fe(2+) serves as cofactor.

It catalyses the reaction N-terminal N-formyl-L-methionyl-[peptide] + H2O = N-terminal L-methionyl-[peptide] + formate. In terms of biological role, removes the formyl group from the N-terminal Met of newly synthesized proteins. Requires at least a dipeptide for an efficient rate of reaction. N-terminal L-methionine is a prerequisite for activity but the enzyme has broad specificity at other positions. The chain is Peptide deformylase from Caulobacter sp. (strain K31).